The sequence spans 290 residues: Sodium/potassium-transporting ATPase subunit beta-2 (290 aa).

Residues 1-39 (MVIQKEKKSCGQVVEEWKEFVWNPRTHQFMGRTGTSWAF) are Cytoplasmic-facing. A helical; Signal-anchor for type II membrane protein membrane pass occupies residues 40–67 (ILLFYLVFYGFLTAMFTLTMWVMLQTVS). Topologically, residues 68 to 290 (DHTPKYQDRL…VAFKLRINKA (223 aa)) are extracellular. Asn96 and Asn118 each carry an N-linked (GlcNAc...) asparagine glycan. The cysteines at positions 129 and 150 are disulfide-linked. N-linked (GlcNAc...) asparagine glycans are attached at residues Asn153 and Asn159. Cys160 and Cys177 are disulfide-bonded. Residues Asn193, Asn197, and Asn238 are each glycosylated (N-linked (GlcNAc...) asparagine). Residues 193–290 (NQSMNVTCVG…VAFKLRINKA (98 aa)) are immunoglobulin-like. A disulfide bridge connects residues Cys200 and Cys261.

Belongs to the X(+)/potassium ATPases subunit beta family. As to quaternary structure, the sodium/potassium-transporting ATPase is composed of a catalytic alpha subunit, an auxiliary non-catalytic beta subunit and an additional regulatory subunit. Interacts with isoform 2 of BSG. In terms of tissue distribution, highly expressed in brain (at protein level).

It is found in the cell membrane. Functionally, this is the non-catalytic component of the active enzyme, which catalyzes the hydrolysis of ATP coupled with the exchange of Na(+) and K(+) ions across the plasma membrane. The exact function of the beta-2 subunit is not known. Mediates cell adhesion of neurons and astrocytes, and promotes neurite outgrowth. The polypeptide is Sodium/potassium-transporting ATPase subunit beta-2 (Atp1b2) (Rattus norvegicus (Rat)).